The chain runs to 558 residues: MDIKRTVLWVIFFMSAVMLFDNWQRSHGRPSMFFPNVTQTNTASNATNGNGASGANAAAAANALPAAATGAAPATTAPAAQAQLVRFSTDVYNGEIDTRGGTLAKLTLTKAGDGKQPDLSVTLFDHTANHTYLARTGLLGGDFPNHNDVYAQVAGPTSLAADQNTLKLSFESPVKGGVKVVKTYTFTRGSYVIGVDTKIENVGAAPVTPSVYMELVRDNSSVETPMFSHTFLGPAVYTDQKHFQKITFGDIDKNKADYVTSADNGWIAMVQHYFASAWIPQSGAKRDIYVEKIDPTLYRVGVKQPVAAIAPGQSADVSARLFAGPEEERMLEGIAPGLELVKDYGWVTIIAKPLFWLLEKIHGFVGNWGWAIVLLTLLIKAVFFPLSAASYKSMARMKEITPRMQALRERFKSDPQKMNAALMELYKTEKVNPFGGCLPVVIQIPVFISLYWVLLASVEMRGAPWVLWIHDLSQRDPYFILPVLMAVSMFVQTKLNPTPPDPVQAKMMMFMPIAFSVMFFFFPAGLVLYYVVNNVLSIAQQYYITRTLGGAAAKKKAS.

5 helical membrane-spanning segments follow: residues 3–23, 364–384, 438–458, 477–497, and 508–528; these read IKRTVLWVIFFMSAVMLFDNW, FVGNWGWAIVLLTLLIKAVFF, LPVVIQIPVFISLYWVLLASV, PYFILPVLMAVSMFVQTKLNP, and MMFMPIAFSVMFFFFPAGLVL.

Belongs to the OXA1/ALB3/YidC family. Type 1 subfamily. Interacts with the Sec translocase complex via SecD. Specifically interacts with transmembrane segments of nascent integral membrane proteins during membrane integration.

Its subcellular location is the cell inner membrane. Its function is as follows. Required for the insertion and/or proper folding and/or complex formation of integral membrane proteins into the membrane. Involved in integration of membrane proteins that insert both dependently and independently of the Sec translocase complex, as well as at least some lipoproteins. Aids folding of multispanning membrane proteins. The protein is Membrane protein insertase YidC of Burkholderia pseudomallei (strain 668).